The primary structure comprises 68 residues: Antimicrobial peptide Eval418 (68 aa).

Residues 1 to 23 form the signal peptide; sequence MRTQLAVLLVALVLLQMIAQSEA. I36 is modified (isoleucine amide). A propeptide spanning residues 37–68 is cleaved from the precursor; the sequence is GKRGLRNLDDLDDVFDDDLSAADLEFLKQLMR.

The protein belongs to the non-disulfide-bridged peptide (NDBP) superfamily. Short antimicrobial peptide (group 4) family. Expressed by the venom gland.

The protein resides in the secreted. Functionally, probable antimicrobial peptide. Shows dose-dependent and time-dependent inactivation of herpes simplex virus type 1 (HSV-1) and dose-dependent inhibition of HSV-1 viral attachment to host cells. Scarcely suppress an established HSV-1 infection due to poor cellular uptake. The protein is Antimicrobial peptide Eval418 of Euscorpiops validus (Scorpion).